A 161-amino-acid chain; its full sequence is Regulator of ribonuclease activity A (161 aa).

The protein belongs to the RraA family. Homotrimer. Binds to both RNA-binding sites in the C-terminal region of Rne and to RhlB.

It is found in the cytoplasm. In terms of biological role, globally modulates RNA abundance by binding to RNase E (Rne) and regulating its endonucleolytic activity. Can modulate Rne action in a substrate-dependent manner by altering the composition of the degradosome. Modulates RNA-binding and helicase activities of the degradosome. This is Regulator of ribonuclease activity A from Yersinia enterocolitica serotype O:8 / biotype 1B (strain NCTC 13174 / 8081).